A 368-amino-acid chain; its full sequence is Aminomethyltransferase (368 aa).

It belongs to the GcvT family. In terms of assembly, the glycine cleavage system is composed of four proteins: P, T, L and H.

It catalyses the reaction N(6)-[(R)-S(8)-aminomethyldihydrolipoyl]-L-lysyl-[protein] + (6S)-5,6,7,8-tetrahydrofolate = N(6)-[(R)-dihydrolipoyl]-L-lysyl-[protein] + (6R)-5,10-methylene-5,6,7,8-tetrahydrofolate + NH4(+). Its function is as follows. The glycine cleavage system catalyzes the degradation of glycine. The polypeptide is Aminomethyltransferase (Xylella fastidiosa (strain 9a5c)).